Reading from the N-terminus, the 328-residue chain is LOB domain-containing protein 27 (328 aa).

Residues 35–136 form the LOB domain; the sequence is GACAACKYQR…EELKAVNSQL (102 aa).

It belongs to the LOB domain-containing protein family.

The chain is LOB domain-containing protein 27 (LBD27) from Arabidopsis thaliana (Mouse-ear cress).